The sequence spans 443 residues: ATP-dependent protease ATPase subunit HslU (443 aa).

Residues V18 and 60–65 contribute to the ATP site; that span reads GVGKTE. The interval 139 to 160 is disordered; the sequence is AKNNWGQPEESGEPSSARQNFR. 3 residues coordinate ATP: D256, E321, and R393.

This sequence belongs to the ClpX chaperone family. HslU subfamily. In terms of assembly, a double ring-shaped homohexamer of HslV is capped on each side by a ring-shaped HslU homohexamer. The assembly of the HslU/HslV complex is dependent on binding of ATP.

The protein resides in the cytoplasm. ATPase subunit of a proteasome-like degradation complex; this subunit has chaperone activity. The binding of ATP and its subsequent hydrolysis by HslU are essential for unfolding of protein substrates subsequently hydrolyzed by HslV. HslU recognizes the N-terminal part of its protein substrates and unfolds these before they are guided to HslV for hydrolysis. The chain is ATP-dependent protease ATPase subunit HslU from Sodalis glossinidius (strain morsitans).